The primary structure comprises 320 residues: Acetyl-coenzyme A carboxylase carboxyl transferase subunit alpha (320 aa).

In terms of domain architecture, CoA carboxyltransferase C-terminal spans 33–294 (AFESEIQALR…GDAVEDELKA (262 aa)).

It belongs to the AccA family. In terms of assembly, acetyl-CoA carboxylase is a heterohexamer composed of biotin carboxyl carrier protein (AccB), biotin carboxylase (AccC) and two subunits each of ACCase subunit alpha (AccA) and ACCase subunit beta (AccD).

It is found in the cytoplasm. It catalyses the reaction N(6)-carboxybiotinyl-L-lysyl-[protein] + acetyl-CoA = N(6)-biotinyl-L-lysyl-[protein] + malonyl-CoA. The protein operates within lipid metabolism; malonyl-CoA biosynthesis; malonyl-CoA from acetyl-CoA: step 1/1. Component of the acetyl coenzyme A carboxylase (ACC) complex. First, biotin carboxylase catalyzes the carboxylation of biotin on its carrier protein (BCCP) and then the CO(2) group is transferred by the carboxyltransferase to acetyl-CoA to form malonyl-CoA. This chain is Acetyl-coenzyme A carboxylase carboxyl transferase subunit alpha, found in Caulobacter sp. (strain K31).